A 469-amino-acid polypeptide reads, in one-letter code: tRNA(Ile)-lysidine synthase (469 aa).

Residue 26–31 (SGGPDS) coordinates ATP.

Belongs to the tRNA(Ile)-lysidine synthase family.

It localises to the cytoplasm. It catalyses the reaction cytidine(34) in tRNA(Ile2) + L-lysine + ATP = lysidine(34) in tRNA(Ile2) + AMP + diphosphate + H(+). In terms of biological role, ligates lysine onto the cytidine present at position 34 of the AUA codon-specific tRNA(Ile) that contains the anticodon CAU, in an ATP-dependent manner. Cytidine is converted to lysidine, thus changing the amino acid specificity of the tRNA from methionine to isoleucine. The polypeptide is tRNA(Ile)-lysidine synthase (Shouchella clausii (strain KSM-K16) (Alkalihalobacillus clausii)).